Consider the following 210-residue polypeptide: Urease accessory protein UreE (210 aa).

The interval Pro-136–Lys-210 is disordered. 2 stretches are compositionally biased toward basic and acidic residues: residues Ser-145–Asp-169 and His-178–Gly-196. Positions His-197 to Lys-210 are enriched in basic residues.

This sequence belongs to the UreE family.

It localises to the cytoplasm. Functionally, involved in urease metallocenter assembly. Binds nickel. Probably functions as a nickel donor during metallocenter assembly. The polypeptide is Urease accessory protein UreE (Bradyrhizobium sp. (strain ORS 278)).